We begin with the raw amino-acid sequence, 130 residues long: Histone H2A type 1-D (130 aa).

A disordered region spans residues 1–22 (MSGRGKQGGKARAKAKTRSSRA). Position 2 is an N-acetylserine (serine 2). Position 2 is a phosphoserine; by RPS6KA5 (serine 2). The residue at position 4 (arginine 4) is a Citrulline; alternate. Symmetric dimethylarginine; by PRMT5; alternate is present on arginine 4. N6-(2-hydroxyisobutyryl)lysine; alternate is present on residues lysine 6 and lysine 10. An N6-acetyllysine; alternate modification is found at lysine 6. The span at 7–19 (QGGKARAKAKTRS) shows a compositional bias: basic residues. N6-(beta-hydroxybutyryl)lysine; alternate occurs at positions 10 and 14. At lysine 10 the chain carries N6-lactoyllysine; alternate. Lysine 10 bears the N6-succinyllysine; alternate mark. Lysine 14 participates in a covalent cross-link: Glycyl lysine isopeptide (Lys-Gly) (interchain with G-Cter in ubiquitin); alternate. A Glycyl lysine isopeptide (Lys-Gly) (interchain with G-Cter in ubiquitin) cross-link involves residue lysine 16. Lysine 37 is modified (N6-(2-hydroxyisobutyryl)lysine; alternate). Lysine 37 is modified (N6-(beta-hydroxybutyryl)lysine; alternate). Lysine 37 is subject to N6-crotonyllysine; alternate. Lysine 75 and lysine 76 each carry N6-(2-hydroxyisobutyryl)lysine. Residue lysine 96 is modified to N6-(2-hydroxyisobutyryl)lysine; alternate. Lysine 96 is modified (N6-(beta-hydroxybutyryl)lysine; alternate). Lysine 96 is modified (N6-succinyllysine; alternate). Lysine 96 carries the N6-glutaryllysine; alternate modification. Residue lysine 100 is modified to N6-glutaryllysine. Position 105 is an N5-methylglutamine (glutamine 105). N6-(2-hydroxyisobutyryl)lysine; alternate is present on lysine 119. Residue lysine 119 is modified to N6-(beta-hydroxybutyryl)lysine; alternate. An N6-crotonyllysine; alternate mark is found at lysine 119 and lysine 120. N6-glutaryllysine; alternate is present on residues lysine 119 and lysine 120. Lysine 120 participates in a covalent cross-link: Glycyl lysine isopeptide (Lys-Gly) (interchain with G-Cter in ubiquitin); alternate. Threonine 121 carries the post-translational modification Phosphothreonine; by DCAF1. Lysine 126 carries the N6-crotonyllysine; alternate modification. An N6-glutaryllysine; alternate modification is found at lysine 126.

The protein belongs to the histone H2A family. The nucleosome is a histone octamer containing two molecules each of H2A, H2B, H3 and H4 assembled in one H3-H4 heterotetramer and two H2A-H2B heterodimers. The octamer wraps approximately 147 bp of DNA. Deiminated on Arg-4 in granulocytes upon calcium entry. Post-translationally, monoubiquitination of Lys-120 (H2AK119Ub) by RING1, TRIM37 and RNF2/RING2 complex gives a specific tag for epigenetic transcriptional repression and participates in X chromosome inactivation of female mammals. It is involved in the initiation of both imprinted and random X inactivation. Ubiquitinated H2A is enriched in inactive X chromosome chromatin. Ubiquitination of H2A functions downstream of methylation of 'Lys-27' of histone H3 (H3K27me). H2AK119Ub by RNF2/RING2 can also be induced by ultraviolet and may be involved in DNA repair. Monoubiquitination of Lys-120 (H2AK119Ub) by TRIM37 may promote transformation of cells in a number of breast cancers. Following DNA double-strand breaks (DSBs), it is ubiquitinated through 'Lys-63' linkage of ubiquitin moieties by the E2 ligase UBE2N and the E3 ligases RNF8 and RNF168, leading to the recruitment of repair proteins to sites of DNA damage. Ubiquitination at Lys-14 and Lys-16 (H2AK13Ub and H2AK15Ub, respectively) in response to DNA damage is initiated by RNF168 that mediates monoubiquitination at these 2 sites, and 'Lys-63'-linked ubiquitin are then conjugated to monoubiquitin; RNF8 is able to extend 'Lys-63'-linked ubiquitin chains in vitro. Deubiquitinated by USP51 at Lys-14 and Lys-16 (H2AK13Ub and H2AK15Ub, respectively) after damaged DNA is repaired. H2AK119Ub and ionizing radiation-induced 'Lys-63'-linked ubiquitination (H2AK13Ub and H2AK15Ub) are distinct events. In terms of processing, phosphorylation on Ser-2 (H2AS1ph) is enhanced during mitosis. Phosphorylation on Ser-2 by RPS6KA5/MSK1 directly represses transcription. Acetylation of H3 inhibits Ser-2 phosphorylation by RPS6KA5/MSK1. Phosphorylation at Thr-121 (H2AT120ph) by DCAF1 is present in the regulatory region of many tumor suppresor genes and down-regulates their transcription. Glutamine methylation at Gln-105 (H2AQ104me) by FBL is specifically dedicated to polymerase I. It is present at 35S ribosomal DNA locus and impairs binding of the FACT complex. Post-translationally, symmetric dimethylation on Arg-4 by the PRDM1/PRMT5 complex may play a crucial role in the germ-cell lineage. In terms of processing, crotonylation (Kcr) is specifically present in male germ cells and marks testis-specific genes in post-meiotic cells, including X-linked genes that escape sex chromosome inactivation in haploid cells. Crotonylation marks active promoters and enhancers and confers resistance to transcriptional repressors. It is also associated with post-meiotically activated genes on autosomes. Lactylated in macrophages by EP300/P300 by using lactoyl-CoA directly derived from endogenous or exogenous lactate, leading to stimulates gene transcription.

It localises to the nucleus. The protein localises to the chromosome. Functionally, core component of nucleosome. Nucleosomes wrap and compact DNA into chromatin, limiting DNA accessibility to the cellular machineries which require DNA as a template. Histones thereby play a central role in transcription regulation, DNA repair, DNA replication and chromosomal stability. DNA accessibility is regulated via a complex set of post-translational modifications of histones, also called histone code, and nucleosome remodeling. This is Histone H2A type 1-D from Homo sapiens (Human).